We begin with the raw amino-acid sequence, 57 residues long: Preprotein translocase subunit SecG (57 aa).

Residues 1–33 are Cytoplasmic-facing; sequence MARRRRYEGLNPFVAAGLIKFSEEGELERIKLT. A helical transmembrane segment spans residues 34–55; that stretch reads PKSAVVISVALIAAILVLNLIH. Over 56–57 the chain is Extracellular; it reads PL.

This sequence belongs to the SEC61-beta family. In terms of assembly, component of the protein translocase complex. Heterotrimer consisting of alpha (SecY), beta (SecG) and gamma (SecE) subunits. Can form oligomers of the heterotrimer.

The protein localises to the cell membrane. Its function is as follows. Involved in protein export. The function of the beta subunit is unknown, but it may be involved in stabilization of the trimeric complex. This chain is Preprotein translocase subunit SecG, found in Pyrobaculum neutrophilum (strain DSM 2338 / JCM 9278 / NBRC 100436 / V24Sta) (Thermoproteus neutrophilus).